Here is a 404-residue protein sequence, read N- to C-terminus: Inner membrane transport protein YdiM (404 aa).

The Periplasmic segment spans residues 1–5 (MKNPY). The helical transmembrane segment at 6–26 (FPTALGLYFNYLVHGMGVLLM) threads the bilayer. Topologically, residues 27 to 43 (SLNMASLETLWQTNAAG) are cytoplasmic. The chain crosses the membrane as a helical span at residues 44 to 64 (VSIVISSLGIGRLSVLLFAGL). The Periplasmic portion of the chain corresponds to 65-84 (LSDRFGRRPFIMLGMCCYMA). Residues 85–105 (FFFGILQTNNIIIAYVFGFLA) traverse the membrane as a helical segment. The Cytoplasmic segment spans residues 106–132 (GMANSFLDAGTYPSLMEAFPRSPGTAN). The chain crosses the membrane as a helical span at residues 133–153 (ILIKAFVSSGQFLLPLIISLL). The Periplasmic portion of the chain corresponds to 154 to 157 (VWAE). A helical transmembrane segment spans residues 158-178 (LWFGWSFMIAAGIMFINALFL). Residues 179–206 (YRCTFPPHPGRRLPVIKKTTSSTEHRCS) are Cytoplasmic-facing. Residues 207–227 (IIDLASYTLYGYISMATFYLV) form a helical membrane-spanning segment. Topologically, residues 228–246 (SQWLAQYGQFVAGMSYTMS) are periplasmic. Residues 247–267 (IKLLSIYTVGSLLCVFITAPL) form a helical membrane-spanning segment. At 268–273 (IRNTVR) the chain is on the cytoplasmic side. Residues 274-294 (PTTLLMLYTFISFIALFTVCL) traverse the membrane as a helical segment. Over 295 to 296 (HP) the chain is Periplasmic. The chain crosses the membrane as a helical span at residues 297–317 (TFYVVIIFAFVIGFTSAGGVV). Over 318 to 336 (QIGLTLMAERFPYAKGKAT) the chain is Cytoplasmic. A helical transmembrane segment spans residues 337–357 (GIYYSAGSIATFTIPLITAHL). The Periplasmic portion of the chain corresponds to 358 to 364 (SQRSIAD). The helical transmembrane segment at 365-385 (IMWFDTAIAAIGFLLALFIGL) threads the bilayer. Over 386 to 404 (RSRKKTRHHSLKENVAPGG) the chain is Cytoplasmic.

The protein belongs to the major facilitator superfamily.

The protein localises to the cell inner membrane. This Escherichia coli (strain K12) protein is Inner membrane transport protein YdiM (ydiM).